The primary structure comprises 394 residues: 4-hydroxyphenylpyruvate dioxygenase (394 aa).

VOC domains follow at residues 27 to 161 (GYDH…LIER) and 193 to 351 (HIDH…LFTK). Fe cation contacts are provided by H196, H279, and E362.

It belongs to the 4HPPD family. Fe cation serves as cofactor.

It catalyses the reaction 3-(4-hydroxyphenyl)pyruvate + O2 = homogentisate + CO2. The protein operates within amino-acid degradation; L-phenylalanine degradation; acetoacetate and fumarate from L-phenylalanine: step 3/6. The polypeptide is 4-hydroxyphenylpyruvate dioxygenase (Yarrowia lipolytica (strain CLIB 122 / E 150) (Yeast)).